The sequence spans 155 residues: Small ribosomal subunit protein uS7 (155 aa).

This sequence belongs to the universal ribosomal protein uS7 family. In terms of assembly, part of the 30S ribosomal subunit. Contacts proteins S9 and S11.

One of the primary rRNA binding proteins, it binds directly to 16S rRNA where it nucleates assembly of the head domain of the 30S subunit. Is located at the subunit interface close to the decoding center, probably blocks exit of the E-site tRNA. The protein is Small ribosomal subunit protein uS7 of Pelodictyon phaeoclathratiforme (strain DSM 5477 / BU-1).